A 106-amino-acid chain; its full sequence is Probable insulin-like peptide beta-type 2 (106 aa).

A signal peptide spans 1-15; the sequence is MNAIIFCLLFTTVTA. Positions 16–56 are excised as a propeptide; the sequence is TYEVFGKGIEHRNEHLIINQLDIIPVESTPTPNRASRVQKR. Intrachain disulfides connect C58-C86, C70-C99, C73-C100, and C85-C90.

It belongs to the insulin family.

It is found in the secreted. This Caenorhabditis elegans protein is Probable insulin-like peptide beta-type 2 (ins-2).